The sequence spans 157 residues: Ribosomal RNA large subunit methyltransferase H (157 aa).

S-adenosyl-L-methionine-binding positions include glycine 106 and 125-130 (LSEMTF).

This sequence belongs to the RNA methyltransferase RlmH family. In terms of assembly, homodimer.

The protein resides in the cytoplasm. The catalysed reaction is pseudouridine(1915) in 23S rRNA + S-adenosyl-L-methionine = N(3)-methylpseudouridine(1915) in 23S rRNA + S-adenosyl-L-homocysteine + H(+). Functionally, specifically methylates the pseudouridine at position 1915 (m3Psi1915) in 23S rRNA. This Syntrophobacter fumaroxidans (strain DSM 10017 / MPOB) protein is Ribosomal RNA large subunit methyltransferase H.